The chain runs to 312 residues: Olfactory receptor-like protein COR2 (312 aa).

At 1-26 the chain is on the extracellular side; the sequence is MASGNCTTPTTFILSGLTDNPRLQMP. N5 is a glycosylation site (N-linked (GlcNAc...) asparagine). The chain crosses the membrane as a helical span at residues 27–49; it reads LFMVFLVIYTTTLLTNLGLIALI. Topologically, residues 50–57 are cytoplasmic; sequence GMDLHLQT. The chain crosses the membrane as a helical span at residues 58 to 79; it reads PMYIFLQNLSFTDAAYSTVITP. Topologically, residues 80 to 100 are extracellular; sequence KMLATFLEERRTISYVGCILQ. Residues C97 and C179 are joined by a disulfide bond. The chain crosses the membrane as a helical span at residues 101-120; it reads YFSFVLLTTSEWLLLAVMAY. Topologically, residues 121–139 are cytoplasmic; it reads DRYVAICKPLLYPSIMTKA. A helical membrane pass occupies residues 140 to 164; it reads VCWRLVKGLYSLAFLNSLVHTSGLL. The Extracellular portion of the chain corresponds to 165-205; that stretch reads KLSFCSSNVVNHFFCDNRPLFQISSSSTTLNELLVIISGSL. Residues 206 to 226 traverse the membrane as a helical segment; sequence FVMSSIITILISYVFIILTVV. The Cytoplasmic portion of the chain corresponds to 227 to 239; the sequence is MIRSKDGKYKAFS. Residues 240 to 260 form a helical membrane-spanning segment; that stretch reads TCTSHLMAVSLFHGTVIFMYL. Over 261–271 the chain is Extracellular; that stretch reads RSVKLFSLDTD. A helical membrane pass occupies residues 272-292; that stretch reads KIASLFYTVVIPMLNPLIYSW. Over 293 to 312 the chain is Cytoplasmic; it reads RNKEVKDALRRLTATSVWLH.

The protein belongs to the G-protein coupled receptor 1 family.

Its subcellular location is the cell membrane. Functionally, odorant receptor. This Gallus gallus (Chicken) protein is Olfactory receptor-like protein COR2 (COR2).